The primary structure comprises 301 residues: Putative hydro-lyase C5H10.01 (301 aa).

The protein belongs to the D-glutamate cyclase family.

The chain is Putative hydro-lyase C5H10.01 from Schizosaccharomyces pombe (strain 972 / ATCC 24843) (Fission yeast).